The primary structure comprises 341 residues: Pyrophosphate--fructose 6-phosphate 1-phosphotransferase (341 aa).

Position 10 (Gly-10) interacts with diphosphate. Mg(2+) is bound at residue Glu-103. Substrate is bound by residues 125–127 (TID), Arg-162, 169–171 (MGR), Glu-221, Arg-265, and 271–274 (HTQR). Asp-127 functions as the Proton acceptor in the catalytic mechanism.

Belongs to the phosphofructokinase type A (PFKA) family. Mixed-substrate PFK group III subfamily. In terms of assembly, homotetramer. Requires Mg(2+) as cofactor.

The protein resides in the cytoplasm. The catalysed reaction is beta-D-fructose 6-phosphate + diphosphate = beta-D-fructose 1,6-bisphosphate + phosphate + H(+). The protein operates within carbohydrate degradation; glycolysis; D-glyceraldehyde 3-phosphate and glycerone phosphate from D-glucose: step 3/4. Its activity is regulated as follows. Non-allosteric. Its function is as follows. Catalyzes the phosphorylation of D-fructose 6-phosphate, the first committing step of glycolysis. Uses inorganic phosphate (PPi) as phosphoryl donor instead of ATP like common ATP-dependent phosphofructokinases (ATP-PFKs), which renders the reaction reversible, and can thus function both in glycolysis and gluconeogenesis. Consistently, PPi-PFK can replace the enzymes of both the forward (ATP-PFK) and reverse (fructose-bisphosphatase (FBPase)) reactions. This Amycolatopsis methanolica protein is Pyrophosphate--fructose 6-phosphate 1-phosphotransferase.